Reading from the N-terminus, the 245-residue chain is Carbohydrate deacetylase (245 aa).

Mg(2+) contacts are provided by His-59 and His-125.

It belongs to the YdjC deacetylase family. In terms of assembly, homodimer. The cofactor is Mg(2+).

In terms of biological role, probably catalyzes the deacetylation of acetylated carbohydrates an important step in the degradation of oligosaccharides. The chain is Carbohydrate deacetylase from Listeria monocytogenes serotype 4a (strain HCC23).